A 526-amino-acid polypeptide reads, in one-letter code: Glutamate--cysteine ligase (526 aa).

Belongs to the glutamate--cysteine ligase type 1 family. Type 1 subfamily.

The enzyme catalyses L-cysteine + L-glutamate + ATP = gamma-L-glutamyl-L-cysteine + ADP + phosphate + H(+). It functions in the pathway sulfur metabolism; glutathione biosynthesis; glutathione from L-cysteine and L-glutamate: step 1/2. In Shewanella amazonensis (strain ATCC BAA-1098 / SB2B), this protein is Glutamate--cysteine ligase.